Consider the following 141-residue polypeptide: Large ribosomal subunit protein uL11 (141 aa).

The protein belongs to the universal ribosomal protein uL11 family. Part of the ribosomal stalk of the 50S ribosomal subunit. Interacts with L10 and the large rRNA to form the base of the stalk. L10 forms an elongated spine to which L12 dimers bind in a sequential fashion forming a multimeric L10(L12)X complex.

In terms of biological role, forms part of the ribosomal stalk which helps the ribosome interact with GTP-bound translation factors. This Acidianus ambivalens (Desulfurolobus ambivalens) protein is Large ribosomal subunit protein uL11.